The primary structure comprises 223 residues: Adapter protein MecA (223 aa).

Belongs to the MecA family. In terms of assembly, homodimer.

Functionally, enables the recognition and targeting of unfolded and aggregated proteins to the ClpC protease or to other proteins involved in proteolysis. This Limosilactobacillus reuteri (strain DSM 20016) (Lactobacillus reuteri) protein is Adapter protein MecA.